We begin with the raw amino-acid sequence, 217 residues long: UPF0502 protein Smlt0097 (217 aa).

The protein belongs to the UPF0502 family.

The chain is UPF0502 protein Smlt0097 from Stenotrophomonas maltophilia (strain K279a).